The following is a 368-amino-acid chain: Alanine racemase (368 aa).

Residue K40 is the Proton acceptor; specific for D-alanine of the active site. K40 bears the N6-(pyridoxal phosphate)lysine mark. R136 provides a ligand contact to substrate. The Proton acceptor; specific for L-alanine role is filled by Y263. Residue M310 participates in substrate binding.

Belongs to the alanine racemase family. It depends on pyridoxal 5'-phosphate as a cofactor.

It carries out the reaction L-alanine = D-alanine. It functions in the pathway amino-acid biosynthesis; D-alanine biosynthesis; D-alanine from L-alanine: step 1/1. Catalyzes the interconversion of L-alanine and D-alanine. May also act on other amino acids. In Streptococcus gordonii (strain Challis / ATCC 35105 / BCRC 15272 / CH1 / DL1 / V288), this protein is Alanine racemase (alr).